The chain runs to 176 residues: RNA pyrophosphohydrolase (176 aa).

The Nudix hydrolase domain occupies 6 to 149 (GYRPNVGIII…KRNVYEMALT (144 aa)). A Nudix box motif is present at residues 38 to 59 (GGIKPGESPEAAMYRELMEEVG).

It belongs to the Nudix hydrolase family. RppH subfamily. A divalent metal cation serves as cofactor.

In terms of biological role, accelerates the degradation of transcripts by removing pyrophosphate from the 5'-end of triphosphorylated RNA, leading to a more labile monophosphorylated state that can stimulate subsequent ribonuclease cleavage. The sequence is that of RNA pyrophosphohydrolase from Laribacter hongkongensis (strain HLHK9).